The sequence spans 460 residues: Bifunctional protein GlmU (460 aa).

The pyrophosphorylase stretch occupies residues 1 to 229; sequence MTNYAIILAA…FNESLGVNDR (229 aa). UDP-N-acetyl-alpha-D-glucosamine contacts are provided by residues 8–11, lysine 22, glutamine 72, and 77–78; these read LAAG and GT. Residue aspartate 102 coordinates Mg(2+). Positions 139, 154, 169, and 227 each coordinate UDP-N-acetyl-alpha-D-glucosamine. A Mg(2+)-binding site is contributed by asparagine 227. Residues 230–250 form a linker region; sequence VALATAETVMRQRITQKHMVN. The N-acetyltransferase stretch occupies residues 251–460; it reads GVTFHNPETV…RLAHHPSRSK (210 aa). 2 residues coordinate UDP-N-acetyl-alpha-D-glucosamine: arginine 332 and lysine 350. Histidine 362 (proton acceptor) is an active-site residue. UDP-N-acetyl-alpha-D-glucosamine is bound by residues tyrosine 365 and asparagine 376. Acetyl-CoA-binding positions include alanine 379, 385–386, serine 404, alanine 422, and arginine 439; that span reads NY.

In the N-terminal section; belongs to the N-acetylglucosamine-1-phosphate uridyltransferase family. This sequence in the C-terminal section; belongs to the transferase hexapeptide repeat family. Homotrimer. It depends on Mg(2+) as a cofactor.

It localises to the cytoplasm. It catalyses the reaction alpha-D-glucosamine 1-phosphate + acetyl-CoA = N-acetyl-alpha-D-glucosamine 1-phosphate + CoA + H(+). The enzyme catalyses N-acetyl-alpha-D-glucosamine 1-phosphate + UTP + H(+) = UDP-N-acetyl-alpha-D-glucosamine + diphosphate. The protein operates within nucleotide-sugar biosynthesis; UDP-N-acetyl-alpha-D-glucosamine biosynthesis; N-acetyl-alpha-D-glucosamine 1-phosphate from alpha-D-glucosamine 6-phosphate (route II): step 2/2. It participates in nucleotide-sugar biosynthesis; UDP-N-acetyl-alpha-D-glucosamine biosynthesis; UDP-N-acetyl-alpha-D-glucosamine from N-acetyl-alpha-D-glucosamine 1-phosphate: step 1/1. Its pathway is bacterial outer membrane biogenesis; LPS lipid A biosynthesis. Its function is as follows. Catalyzes the last two sequential reactions in the de novo biosynthetic pathway for UDP-N-acetylglucosamine (UDP-GlcNAc). The C-terminal domain catalyzes the transfer of acetyl group from acetyl coenzyme A to glucosamine-1-phosphate (GlcN-1-P) to produce N-acetylglucosamine-1-phosphate (GlcNAc-1-P), which is converted into UDP-GlcNAc by the transfer of uridine 5-monophosphate (from uridine 5-triphosphate), a reaction catalyzed by the N-terminal domain. This Streptococcus pyogenes serotype M3 (strain ATCC BAA-595 / MGAS315) protein is Bifunctional protein GlmU.